The sequence spans 410 residues: Serine hydroxymethyltransferase (410 aa).

(6S)-5,6,7,8-tetrahydrofolate-binding positions include leucine 119 and 123-125 (GHL). An N6-(pyridoxal phosphate)lysine modification is found at lysine 228. A (6S)-5,6,7,8-tetrahydrofolate-binding site is contributed by 351-353 (SPF).

It belongs to the SHMT family. In terms of assembly, homodimer. Pyridoxal 5'-phosphate serves as cofactor.

The protein resides in the cytoplasm. The catalysed reaction is (6R)-5,10-methylene-5,6,7,8-tetrahydrofolate + glycine + H2O = (6S)-5,6,7,8-tetrahydrofolate + L-serine. The protein operates within one-carbon metabolism; tetrahydrofolate interconversion. It functions in the pathway amino-acid biosynthesis; glycine biosynthesis; glycine from L-serine: step 1/1. Functionally, catalyzes the reversible interconversion of serine and glycine with tetrahydrofolate (THF) serving as the one-carbon carrier. This reaction serves as the major source of one-carbon groups required for the biosynthesis of purines, thymidylate, methionine, and other important biomolecules. Also exhibits THF-independent aldolase activity toward beta-hydroxyamino acids, producing glycine and aldehydes, via a retro-aldol mechanism. The sequence is that of Serine hydroxymethyltransferase from Clostridium perfringens (strain 13 / Type A).